We begin with the raw amino-acid sequence, 202 residues long: Small ribosomal subunit protein uS4 (202 aa).

The span at 1-13 shows a compositional bias: basic residues; the sequence is MSRYRGPRLRVTR. Residues 1–42 form a disordered region; it reads MSRYRGPRLRVTRRLGELPGLTRKASKKSNPPGQHGQARRKR. Positions 90-152 constitute an S4 RNA-binding domain; it reads NRLDNVCFRL…KASKKLVEGN (63 aa).

Belongs to the universal ribosomal protein uS4 family. As to quaternary structure, part of the 30S ribosomal subunit. Contacts protein S5. The interaction surface between S4 and S5 is involved in control of translational fidelity.

Functionally, one of the primary rRNA binding proteins, it binds directly to 16S rRNA where it nucleates assembly of the body of the 30S subunit. Its function is as follows. With S5 and S12 plays an important role in translational accuracy. The protein is Small ribosomal subunit protein uS4 of Prochlorococcus marinus (strain AS9601).